The primary structure comprises 253 residues: Complement C1q subcomponent subunit B (253 aa).

The first 25 residues, 1 to 25 (MKTQWGEVWTHLLLLLLGFLHVSWA), serve as a signal peptide directing secretion. Pyrrolidone carboxylic acid is present on Gln26. The 84-residue stretch at 29-112 (CTGPPGIPGI…GPRGPKGDSG (84 aa)) folds into the Collagen-like domain. 4-hydroxyproline occurs at positions 33, 36, 39, 51, and 54. The interval 35-115 (IPGIPGVPGV…GPKGDSGDYG (81 aa)) is disordered. 5-hydroxylysine is present on residues Lys57 and Lys60. Pro63 is subject to 4-hydroxyproline. A 5-hydroxylysine modification is found at Lys75. The span at 78 to 96 (PGIPGTPGKVGPKGPVGPK) shows a compositional bias: low complexity. A 4-hydroxyproline mark is found at Pro81 and Pro84. 5-hydroxylysine is present on residues Lys90 and Lys96. Pro99 is modified (4-hydroxyproline). Lys108 is modified (5-hydroxylysine). Positions 115–253 (GATQKVAFSA…GFLLFPDMDA (139 aa)) constitute a C1q domain. A disulfide bridge connects residues Cys179 and Cys198. The Ca(2+) site is built by Asp199, Tyr200, and Gln206.

Core component of the complement C1 complex, a calcium-dependent complex composed of 1 molecule of the C1Q subcomplex, 2 molecules of C1R and 2 molecules of C1S. The C1Q subcomplex is composed 18 subunits: 3 chains of C1QA, C1QB, and C1QC trimerize to form 6 collagen-like triple helices connected to six globular ligand-recognition modules (C1q domain). Hydroxylated on lysine and proline residues. Hydroxylated lysine residues can be glycosylated. Mouse C1Q contains up to 64.0 hydroxylysine-galactosylglucose residues. Total percentage hydroxylysine residues glycosylated is 95.1%. Contains no hydroxylysine-monosaccharides. In terms of tissue distribution, highest expression in thioglycolate-activated peritoneal macrophages. Also found in spleen, thymus and heart. Very weak expression liver, kidney, lung and intestine.

The protein resides in the secreted. Its subcellular location is the cell surface. With respect to regulation, the C1Q subcomplex is inhibited by sulfated molecules, such as triterpenoid sulfates, heparan sulfate, or chondroitin sulfates. Core component of the complement C1 complex, a multiprotein complex that initiates the classical pathway of the complement system, a cascade of proteins that leads to phagocytosis and breakdown of pathogens and signaling that strengthens the adaptive immune system. The classical complement pathway is initiated by the C1Q subcomplex of the C1 complex, which specifically binds IgG or IgM immunoglobulins complexed with antigens, forming antigen-antibody complexes on the surface of pathogens: C1QA, together with C1QB and C1QC, specifically recognizes and binds the Fc regions of IgG or IgM via its C1q domain. Immunoglobulin-binding activates the proenzyme C1R, which cleaves C1S, initiating the proteolytic cascade of the complement system. The C1Q subcomplex is activated by a hexamer of IgG complexed with antigens, while it is activated by a pentameric IgM. The C1Q subcomplex also recognizes and binds phosphatidylserine exposed on the surface of cells undergoing programmed cell death, possibly promoting activation of the complement system. This Mus musculus (Mouse) protein is Complement C1q subcomponent subunit B.